The primary structure comprises 356 residues: Rhomboid-related protein 1 (356 aa).

7 helical membrane-spanning segments follow: residues 107–129, 172–194, 201–223, 227–249, 256–275, 290–312, and 319–341; these read WCPP…FFYW, YMFL…LVGI, KIWR…QYAI, SLLV…NVIL, LRWI…FGGA, HLAH…YNVV, and IIRY…FVIV. Ser233 (nucleophile) is an active-site residue. His293 is an active-site residue.

The protein belongs to the peptidase S54 family.

The protein localises to the membrane. The enzyme catalyses Cleaves type-1 transmembrane domains using a catalytic dyad composed of serine and histidine that are contributed by different transmembrane domains.. Serine protease which activates lin-3 isoform a in the proximal vulva precursor cells (VPC) during vulva development to transmit the inductive anchor cell signal to the distal VPCs. This is Rhomboid-related protein 1 from Caenorhabditis elegans.